A 357-amino-acid chain; its full sequence is Biotin synthase (357 aa).

Positions 1–27 (MTTAETKPATETGENAGTTGTAGTAAT) are disordered. The segment covering 9 to 27 (ATETGENAGTTGTAGTAAT) has biased composition (low complexity). The Radical SAM core domain maps to 78–303 (DAVEMEGIIS…RQLLRFAGGR (226 aa)). Residues C93, C97, and C100 each coordinate [4Fe-4S] cluster. Residues C136, C228, and R298 each contribute to the [2Fe-2S] cluster site.

This sequence belongs to the radical SAM superfamily. Biotin synthase family. In terms of assembly, homodimer. [4Fe-4S] cluster serves as cofactor. Requires [2Fe-2S] cluster as cofactor.

The enzyme catalyses (4R,5S)-dethiobiotin + (sulfur carrier)-SH + 2 reduced [2Fe-2S]-[ferredoxin] + 2 S-adenosyl-L-methionine = (sulfur carrier)-H + biotin + 2 5'-deoxyadenosine + 2 L-methionine + 2 oxidized [2Fe-2S]-[ferredoxin]. Its pathway is cofactor biosynthesis; biotin biosynthesis; biotin from 7,8-diaminononanoate: step 2/2. Catalyzes the conversion of dethiobiotin (DTB) to biotin by the insertion of a sulfur atom into dethiobiotin via a radical-based mechanism. This Corynebacterium jeikeium (strain K411) protein is Biotin synthase.